The primary structure comprises 208 residues: Probable DNA-3-methyladenine glycosylase (208 aa).

Belongs to the DNA glycosylase MPG family.

It localises to the nucleus. The enzyme catalyses Hydrolysis of alkylated DNA, releasing 3-methyladenine, 3-methylguanine, 7-methylguanine and 7-methyladenine.. In terms of biological role, hydrolysis of the deoxyribose N-glycosidic bond to excise 3-methyladenine, and 7-methylguanine from the damaged DNA polymer formed by alkylation lesions. This Encephalitozoon cuniculi (strain GB-M1) (Microsporidian parasite) protein is Probable DNA-3-methyladenine glycosylase.